Reading from the N-terminus, the 451-residue chain is Uronate isomerase (451 aa).

The protein belongs to the metallo-dependent hydrolases superfamily. Uronate isomerase family. In terms of assembly, homotrimer.

It carries out the reaction D-glucuronate = D-fructuronate. It catalyses the reaction aldehydo-D-galacturonate = keto-D-tagaturonate. It participates in carbohydrate metabolism; pentose and glucuronate interconversion. This chain is Uronate isomerase, found in Thermotoga maritima (strain ATCC 43589 / DSM 3109 / JCM 10099 / NBRC 100826 / MSB8).